The sequence spans 500 residues: Glutamate--tRNA ligase (500 aa).

A 'HIGH' region motif is present at residues 13–23 (PSPTGTPHVGM). A 'KMSKS' region motif is present at residues 258–262 (KLSKR). Position 261 (Lys261) interacts with ATP.

It belongs to the class-I aminoacyl-tRNA synthetase family. Glutamate--tRNA ligase type 1 subfamily. As to quaternary structure, monomer.

It localises to the cytoplasm. The catalysed reaction is tRNA(Glu) + L-glutamate + ATP = L-glutamyl-tRNA(Glu) + AMP + diphosphate. Functionally, catalyzes the attachment of glutamate to tRNA(Glu) in a two-step reaction: glutamate is first activated by ATP to form Glu-AMP and then transferred to the acceptor end of tRNA(Glu). The protein is Glutamate--tRNA ligase of Corynebacterium jeikeium (strain K411).